The primary structure comprises 217 residues: Transcriptional regulator NovE (217 aa).

Residues 1–41 are disordered; the sequence is MVASGRTASKGRGNGATPVRPTAGDATPVDSGQPSDTTYGG.

Transcription regulator that specifically regulates expression of genes involved in the novobiocin biosynthesis pathway. Probably acts as a positive regulator of transcription. Does not bind DNA. This Streptomyces niveus (Streptomyces spheroides) protein is Transcriptional regulator NovE (novE).